The sequence spans 612 residues: Transcription factor unc-37 (612 aa).

The tract at residues 143 to 228 is disordered; that stretch reads FASPHVNGGD…SNSRARQQQQ (86 aa). The segment covering 150 to 159 has biased composition (gly residues); sequence GGDGAGGSSG. Residues 153–196 are CCN domain; the sequence is GAGGSSGGASEAKKAKLEDPDDGELEIDVTNDDHPSTASNGGAA. Over residues 171–182 the composition is skewed to acidic residues; it reads DPDDGELEIDVT. Positions 202–221 are enriched in polar residues; sequence DSTNSVASSGASTPSIASNS. 6 WD repeats span residues 308–339, 372–402, 414–444, 456–486, 538–568, and 579–609; these read GIPTGLKKKMELNHGEVVCAATISRDNSRVYT, LKENYIRSCKLFEDGNTLLIGGEASTVALWD, TDSQACYALAMSPDEKLLFACLADGNILIYD, GHQDGASCLDLSKDGTKLWSGGLDNSVRCWD, QHESCVLSLKFAHSGKFFISTGKDNALNAWR, and KENSSVLSCDISFDDSLIVTGSGEKKATLYA.

Belongs to the WD repeat Groucho/TLE family. In terms of assembly, interacts with unc-4. Interacts with ref-1. May interact with mls-1.

The protein localises to the nucleus. Its function is as follows. Transcriptional corepressor that functions with the neural specificity gene unc-4 to govern motor neuron identity. In concert with unc-4, represses the expression of VB-specific genes such as ceh-12, thereby preventing the adoption of VB motor neuron fate. May function with transcription factor mls-1 to promote uterine muscle specification and formation. The chain is Transcription factor unc-37 (unc-37) from Caenorhabditis elegans.